We begin with the raw amino-acid sequence, 83 residues long: Arminin 3a (83 aa).

An N-terminal signal peptide occupies residues 1–18 (MKTVFAILFLTFIALTCA). Positions 19 to 57 (RNYEDLKEKIKNEVEREIFEDLEEESDELENNFKKFNDA) are excised as a propeptide. The residue at position 80 (alanine 80) is an Alanine amide.

It belongs to the arminin family. Expressed in entodermal epithelium along the body column.

The protein localises to the secreted. Its subcellular location is the target cell membrane. Its function is as follows. Antimicrobial peptide with a broad-spectrum antimicrobial activity. Keeps its antibacterial activity under a wide range of salt concentrations that mimic physiological conditions of human blood, which is surprising, since Hydra is an obligate freshwater animal with nearly no salt tolerance. Does not affect red blood cells. In Hydra vulgaris (Hydra), this protein is Arminin 3a.